The following is a 178-amino-acid chain: Endothelin-2 (178 aa).

An N-terminal signal peptide occupies residues 1–24 (MVSVPTTWCSVALALLVALHEGKG). Residues 25–46 (QAAATLEQPASSSHAQGTHLRL) constitute a propeptide that is removed on maturation. 2 cysteine pairs are disulfide-bonded: Cys49/Cys63 and Cys51/Cys59. The propeptide occupies 70 to 178 (VNTPEQTAPY…RSTHSRWRKR (109 aa)). The interval 96–111 (CQCSSARDPACATFCL) is endothelin-like. Positions 159–178 (KRQQEAMREPRSTHSRWRKR) are disordered. A compositionally biased stretch (basic and acidic residues) spans 160 to 170 (RQQEAMREPRS).

This sequence belongs to the endothelin/sarafotoxin family. As to expression, expressed in lung, but not in placental stem villi vessels or cultured placental villi smooth muscle cells.

It localises to the secreted. Functionally, endothelins are endothelium-derived vasoconstrictor peptides. In Homo sapiens (Human), this protein is Endothelin-2 (EDN2).